A 571-amino-acid polypeptide reads, in one-letter code: Sulfite reductase [NADPH] hemoprotein beta-component (571 aa).

Residues Cys-436, Cys-442, Cys-481, and Cys-485 each coordinate [4Fe-4S] cluster. Siroheme is bound at residue Cys-485.

This sequence belongs to the nitrite and sulfite reductase 4Fe-4S domain family. As to quaternary structure, alpha(8)-beta(8). The alpha component is a flavoprotein, the beta component is a hemoprotein. It depends on siroheme as a cofactor. The cofactor is [4Fe-4S] cluster.

It carries out the reaction hydrogen sulfide + 3 NADP(+) + 3 H2O = sulfite + 3 NADPH + 4 H(+). The protein operates within sulfur metabolism; hydrogen sulfide biosynthesis; hydrogen sulfide from sulfite (NADPH route): step 1/1. Functionally, component of the sulfite reductase complex that catalyzes the 6-electron reduction of sulfite to sulfide. This is one of several activities required for the biosynthesis of L-cysteine from sulfate. This chain is Sulfite reductase [NADPH] hemoprotein beta-component (cysI), found in Bacillus subtilis (strain 168).